Reading from the N-terminus, the 367-residue chain is NADH-quinone oxidoreductase subunit D (367 aa).

It belongs to the complex I 49 kDa subunit family. NDH-1 is composed of 14 different subunits. Subunits NuoB, C, D, E, F, and G constitute the peripheral sector of the complex.

It localises to the cell inner membrane. The catalysed reaction is a quinone + NADH + 5 H(+)(in) = a quinol + NAD(+) + 4 H(+)(out). Functionally, NDH-1 shuttles electrons from NADH, via FMN and iron-sulfur (Fe-S) centers, to quinones in the respiratory chain. The immediate electron acceptor for the enzyme in this species is believed to be ubiquinone. Couples the redox reaction to proton translocation (for every two electrons transferred, four hydrogen ions are translocated across the cytoplasmic membrane), and thus conserves the redox energy in a proton gradient. In Thermosipho melanesiensis (strain DSM 12029 / CIP 104789 / BI429), this protein is NADH-quinone oxidoreductase subunit D.